An 82-amino-acid chain; its full sequence is Sec-independent protein translocase protein TatA (82 aa).

The helical transmembrane segment at 1-21 (MGGISVWQLLIIAVIVVLLFG) threads the bilayer. The interval 41 to 82 (KAMSEDEPAKKDDKDADFEPKSLEEQQKKEAAPESKKDKEQA) is disordered. Basic and acidic residues predominate over residues 42-82 (AMSEDEPAKKDDKDADFEPKSLEEQQKKEAAPESKKDKEQA).

Belongs to the TatA/E family. The Tat system comprises two distinct complexes: a TatABC complex, containing multiple copies of TatA, TatB and TatC subunits, and a separate TatA complex, containing only TatA subunits. Substrates initially bind to the TatABC complex, which probably triggers association of the separate TatA complex to form the active translocon.

It localises to the cell inner membrane. Part of the twin-arginine translocation (Tat) system that transports large folded proteins containing a characteristic twin-arginine motif in their signal peptide across membranes. TatA could form the protein-conducting channel of the Tat system. This Vibrio campbellii (strain ATCC BAA-1116) protein is Sec-independent protein translocase protein TatA.